A 1228-amino-acid chain; its full sequence is Membrane-anchored lipid-binding protein LAM1 (1228 aa).

Over methionine 1–lysine 1062 the chain is Cytoplasmic. Positions glutamate 308–arginine 421 constitute a PH domain. A VASt domain is found at glutamate 773–asparagine 978. Residues threonine 1063–isoleucine 1083 form a helical membrane-spanning segment. Topologically, residues histidine 1084 to valine 1228 are lumenal. Asparagine 1205 carries N-linked (GlcNAc...) asparagine glycosylation.

Belongs to the SIP3 family.

The protein resides in the mitochondrion membrane. The protein localises to the endoplasmic reticulum membrane. Involved in mitochondrial fragmentation during programmed cell death in response to high levels of alpha-factor mating pheromone or the drug amiodarone. May be involved in sterol transfer between intracellular membranes. In Saccharomyces cerevisiae (strain ATCC 204508 / S288c) (Baker's yeast), this protein is Membrane-anchored lipid-binding protein LAM1.